A 132-amino-acid chain; its full sequence is Small ribosomal subunit protein uS8 (132 aa).

The protein belongs to the universal ribosomal protein uS8 family. As to quaternary structure, part of the 30S ribosomal subunit. Contacts proteins S5 and S12.

Its function is as follows. One of the primary rRNA binding proteins, it binds directly to 16S rRNA central domain where it helps coordinate assembly of the platform of the 30S subunit. This chain is Small ribosomal subunit protein uS8, found in Geobacillus kaustophilus (strain HTA426).